A 283-amino-acid chain; its full sequence is Urease accessory protein UreD (283 aa).

A disordered region spans residues 1 to 20 (MTQTQPVGTLRLTIDDQGPQ).

This sequence belongs to the UreD family. In terms of assembly, ureD, UreF and UreG form a complex that acts as a GTP-hydrolysis-dependent molecular chaperone, activating the urease apoprotein by helping to assemble the nickel containing metallocenter of UreC. The UreE protein probably delivers the nickel.

It localises to the cytoplasm. In terms of biological role, required for maturation of urease via the functional incorporation of the urease nickel metallocenter. The sequence is that of Urease accessory protein UreD from Corynebacterium glutamicum (strain R).